A 330-amino-acid polypeptide reads, in one-letter code: uncharacterized protein (330 aa).

It to H.influenzae HI_0461.

This is an uncharacterized protein from Escherichia coli (strain K12).